Consider the following 164-residue polypeptide: Phosphopantetheine adenylyltransferase (164 aa).

Residue S10 coordinates substrate. Residues 10–11 and H18 each bind ATP; that span reads SF. Substrate contacts are provided by K42, L74, and R88. ATP is bound by residues 89–91, E99, and 124–130; these read GLR and YSFLSSS.

The protein belongs to the bacterial CoaD family. As to quaternary structure, homohexamer. Requires Mg(2+) as cofactor.

The protein localises to the cytoplasm. The catalysed reaction is (R)-4'-phosphopantetheine + ATP + H(+) = 3'-dephospho-CoA + diphosphate. Its pathway is cofactor biosynthesis; coenzyme A biosynthesis; CoA from (R)-pantothenate: step 4/5. Functionally, reversibly transfers an adenylyl group from ATP to 4'-phosphopantetheine, yielding dephospho-CoA (dPCoA) and pyrophosphate. The sequence is that of Phosphopantetheine adenylyltransferase from Exiguobacterium sibiricum (strain DSM 17290 / CCUG 55495 / CIP 109462 / JCM 13490 / 255-15).